The primary structure comprises 103 residues: Large ribosomal subunit protein uL24 (103 aa).

This sequence belongs to the universal ribosomal protein uL24 family. In terms of assembly, part of the 50S ribosomal subunit.

In terms of biological role, one of two assembly initiator proteins, it binds directly to the 5'-end of the 23S rRNA, where it nucleates assembly of the 50S subunit. One of the proteins that surrounds the polypeptide exit tunnel on the outside of the subunit. The chain is Large ribosomal subunit protein uL24 from Exiguobacterium sibiricum (strain DSM 17290 / CCUG 55495 / CIP 109462 / JCM 13490 / 255-15).